The following is a 101-amino-acid chain: MAKQSMKAREVKRVALADKFFAKRAELKAIISDVNATDEDRWNAVLKLQTLPRDSSPSRQRNRCRQTGRPHGFLRKFGLSRIKVREAAMRGEIPGLKKASW.

This sequence belongs to the universal ribosomal protein uS14 family. In terms of assembly, part of the 30S ribosomal subunit. Contacts proteins S3 and S10.

Its function is as follows. Binds 16S rRNA, required for the assembly of 30S particles and may also be responsible for determining the conformation of the 16S rRNA at the A site. This Klebsiella pneumoniae (strain 342) protein is Small ribosomal subunit protein uS14.